An 825-amino-acid polypeptide reads, in one-letter code: Neuroligin-3 (825 aa).

A signal peptide spans 1 to 34 (MWLQPSLSLSPTPTVGRSLCLTLGFLSLVLRAST). Over 35–686 (QAPAPTVNTH…NPRDYSTELS (652 aa)) the chain is Extracellular. An N-linked (GlcNAc...) asparagine glycan is attached at N95. C103 and C138 form a disulfide bridge. Residues 151-172 (SGAKKQGEDLADNDGDEDEDIR) form a disordered region. Residues 159 to 171 (DLADNDGDEDEDI) are compositionally biased toward acidic residues. 2 cysteine pairs are disulfide-bonded: C317/C328 and C487/C521. An N-linked (GlcNAc...) asparagine glycan is attached at N522. 2 stretches are compositionally biased toward polar residues: residues 622–633 (TKVPPPDTTHSS) and 654–666 (AYSNENAPGSWNG). The segment at 622 to 668 (TKVPPPDTTHSSHITRRPNGKTWSTKRPAISPAYSNENAPGSWNGDQ) is disordered. Residues 687-707 (VTIAVGASLLFLNVLAFAALY) traverse the membrane as a helical segment. Residues 708 to 825 (YRKDKRRQEP…LPHSHSTTRV (118 aa)) lie on the Cytoplasmic side of the membrane. S722 carries the post-translational modification Phosphoserine. Y769 carries the phosphotyrosine modification.

The protein belongs to the type-B carboxylesterase/lipase family. As to quaternary structure, homodimer, and heterodimer with NLGN1 and NLGN2. Interacts with neurexins NRXN1, NRXN2 and NRXN3. Interaction with neurexins is mediated by heparan sulfate glycan modification on neurexin. Interacts (via its C-terminus) with DLG4/PSD-95 (via PDZ domain 3). In terms of tissue distribution, brain and arteries (at protein level). Detected in heart, brain, spleen, lung, liver, skeletal muscle, kidney and testis. Expressed in olfactory bulb and olfactory epithelium. Found in olfactory ensheathing glia but not in olfactory neurons, and in developing peripheral glia.

The protein resides in the cell membrane. The protein localises to the synapse. Its function is as follows. Cell surface protein involved in cell-cell-interactions via its interactions with neurexin family members. Plays a role in synapse function and synaptic signal transmission, and probably mediates its effects by recruiting and clustering other synaptic proteins. May promote the initial formation of synapses, but is not essential for this. May also play a role in glia-glia or glia-neuron interactions in the developing peripheral nervous system. The chain is Neuroligin-3 (Nlgn3) from Mus musculus (Mouse).